The sequence spans 213 residues: ATP-dependent Clp protease proteolytic subunit (213 aa).

Ser-114 acts as the Nucleophile in catalysis. His-139 is a catalytic residue.

This sequence belongs to the peptidase S14 family. As to quaternary structure, fourteen ClpP subunits assemble into 2 heptameric rings which stack back to back to give a disk-like structure with a central cavity, resembling the structure of eukaryotic proteasomes.

The protein localises to the cytoplasm. It carries out the reaction Hydrolysis of proteins to small peptides in the presence of ATP and magnesium. alpha-casein is the usual test substrate. In the absence of ATP, only oligopeptides shorter than five residues are hydrolyzed (such as succinyl-Leu-Tyr-|-NHMec, and Leu-Tyr-Leu-|-Tyr-Trp, in which cleavage of the -Tyr-|-Leu- and -Tyr-|-Trp bonds also occurs).. Cleaves peptides in various proteins in a process that requires ATP hydrolysis. Has a chymotrypsin-like activity. Plays a major role in the degradation of misfolded proteins. This chain is ATP-dependent Clp protease proteolytic subunit, found in Pseudomonas putida (strain GB-1).